Reading from the N-terminus, the 209-residue chain is Ribonuclease HII (209 aa).

In terms of domain architecture, RNase H type-2 spans 18–209 (GLVAGVDEVG…FKPVKALLER (192 aa)). Positions 24, 25, and 116 each coordinate a divalent metal cation.

This sequence belongs to the RNase HII family. The cofactor is Mn(2+). It depends on Mg(2+) as a cofactor.

It is found in the cytoplasm. The catalysed reaction is Endonucleolytic cleavage to 5'-phosphomonoester.. In terms of biological role, endonuclease that specifically degrades the RNA of RNA-DNA hybrids. The chain is Ribonuclease HII from Shewanella sp. (strain ANA-3).